The primary structure comprises 472 residues: Ribosomal protein uS12 methylthiotransferase RimO (472 aa).

The MTTase N-terminal domain occupies Pro-22 to Ala-133. The [4Fe-4S] cluster site is built by Cys-31, Cys-67, Cys-96, Cys-171, Cys-175, and Cys-178. The Radical SAM core domain maps to Thr-157–Glu-386. Residues Gln-389–Asp-460 form the TRAM domain.

It belongs to the methylthiotransferase family. RimO subfamily. Requires [4Fe-4S] cluster as cofactor.

It is found in the cytoplasm. It catalyses the reaction L-aspartate(89)-[ribosomal protein uS12]-hydrogen + (sulfur carrier)-SH + AH2 + 2 S-adenosyl-L-methionine = 3-methylsulfanyl-L-aspartate(89)-[ribosomal protein uS12]-hydrogen + (sulfur carrier)-H + 5'-deoxyadenosine + L-methionine + A + S-adenosyl-L-homocysteine + 2 H(+). Functionally, catalyzes the methylthiolation of an aspartic acid residue of ribosomal protein uS12. The protein is Ribosomal protein uS12 methylthiotransferase RimO of Prochlorococcus marinus (strain MIT 9303).